The following is a 313-amino-acid chain: Probable cell division protein WhiA (313 aa).

Positions 275-308 (SLRELGELAQPPLSKSCVNHRLRKLEQIAEHILA) form a DNA-binding region, H-T-H motif.

Belongs to the WhiA family.

In terms of biological role, involved in cell division and chromosome segregation. The sequence is that of Probable cell division protein WhiA from Desulforudis audaxviator (strain MP104C).